Here is a 426-residue protein sequence, read N- to C-terminus: Serine--tRNA ligase (426 aa).

L-serine is bound at residue 233-235 (TAE). 264–266 (RSE) contributes to the ATP binding site. An L-serine-binding site is contributed by Glu287. 351 to 354 (EISS) contacts ATP. Residue Ser387 participates in L-serine binding.

Belongs to the class-II aminoacyl-tRNA synthetase family. Type-1 seryl-tRNA synthetase subfamily. In terms of assembly, homodimer. The tRNA molecule binds across the dimer.

Its subcellular location is the cytoplasm. It catalyses the reaction tRNA(Ser) + L-serine + ATP = L-seryl-tRNA(Ser) + AMP + diphosphate + H(+). The enzyme catalyses tRNA(Sec) + L-serine + ATP = L-seryl-tRNA(Sec) + AMP + diphosphate + H(+). The protein operates within aminoacyl-tRNA biosynthesis; selenocysteinyl-tRNA(Sec) biosynthesis; L-seryl-tRNA(Sec) from L-serine and tRNA(Sec): step 1/1. In terms of biological role, catalyzes the attachment of serine to tRNA(Ser). Is also able to aminoacylate tRNA(Sec) with serine, to form the misacylated tRNA L-seryl-tRNA(Sec), which will be further converted into selenocysteinyl-tRNA(Sec). In Pseudomonas syringae pv. tomato (strain ATCC BAA-871 / DC3000), this protein is Serine--tRNA ligase.